A 485-amino-acid chain; its full sequence is Aspartyl/glutamyl-tRNA(Asn/Gln) amidotransferase subunit B (485 aa).

The protein belongs to the GatB/GatE family. GatB subfamily. In terms of assembly, heterotrimer of A, B and C subunits.

It carries out the reaction L-glutamyl-tRNA(Gln) + L-glutamine + ATP + H2O = L-glutaminyl-tRNA(Gln) + L-glutamate + ADP + phosphate + H(+). It catalyses the reaction L-aspartyl-tRNA(Asn) + L-glutamine + ATP + H2O = L-asparaginyl-tRNA(Asn) + L-glutamate + ADP + phosphate + 2 H(+). In terms of biological role, allows the formation of correctly charged Asn-tRNA(Asn) or Gln-tRNA(Gln) through the transamidation of misacylated Asp-tRNA(Asn) or Glu-tRNA(Gln) in organisms which lack either or both of asparaginyl-tRNA or glutaminyl-tRNA synthetases. The reaction takes place in the presence of glutamine and ATP through an activated phospho-Asp-tRNA(Asn) or phospho-Glu-tRNA(Gln). The polypeptide is Aspartyl/glutamyl-tRNA(Asn/Gln) amidotransferase subunit B (Borrelia garinii subsp. bavariensis (strain ATCC BAA-2496 / DSM 23469 / PBi) (Borreliella bavariensis)).